A 474-amino-acid polypeptide reads, in one-letter code: 6-phospho-beta-galactosidase (474 aa).

5 residues coordinate D-galactose 6-phosphate: Gln19, His116, Asn159, Glu160, and Asn297. Glu160 acts as the Proton donor in catalysis. The Nucleophile role is filled by Glu375. Residues Ser433, Trp434, Lys440, and Tyr442 each coordinate D-galactose 6-phosphate.

This sequence belongs to the glycosyl hydrolase 1 family.

It carries out the reaction a 6-phospho-beta-D-galactoside + H2O = D-galactose 6-phosphate + an alcohol. It functions in the pathway carbohydrate metabolism; lactose degradation; D-galactose 6-phosphate and beta-D-glucose from lactose 6-phosphate: step 1/1. The chain is 6-phospho-beta-galactosidase from Lacticaseibacillus casei (strain BL23) (Lactobacillus casei).